The sequence spans 408 residues: Arginine biosynthesis bifunctional protein ArgJ (408 aa).

Substrate-binding residues include threonine 158, lysine 184, threonine 195, glutamate 281, asparagine 403, and threonine 408. Catalysis depends on threonine 195, which acts as the Nucleophile.

This sequence belongs to the ArgJ family. Heterotetramer of two alpha and two beta chains.

The protein resides in the cytoplasm. The catalysed reaction is N(2)-acetyl-L-ornithine + L-glutamate = N-acetyl-L-glutamate + L-ornithine. It catalyses the reaction L-glutamate + acetyl-CoA = N-acetyl-L-glutamate + CoA + H(+). Its pathway is amino-acid biosynthesis; L-arginine biosynthesis; L-ornithine and N-acetyl-L-glutamate from L-glutamate and N(2)-acetyl-L-ornithine (cyclic): step 1/1. It participates in amino-acid biosynthesis; L-arginine biosynthesis; N(2)-acetyl-L-ornithine from L-glutamate: step 1/4. In terms of biological role, catalyzes two activities which are involved in the cyclic version of arginine biosynthesis: the synthesis of N-acetylglutamate from glutamate and acetyl-CoA as the acetyl donor, and of ornithine by transacetylation between N(2)-acetylornithine and glutamate. The polypeptide is Arginine biosynthesis bifunctional protein ArgJ (Shouchella clausii (strain KSM-K16) (Alkalihalobacillus clausii)).